A 142-amino-acid chain; its full sequence is Large ribosomal subunit protein uL11 (142 aa).

It belongs to the universal ribosomal protein uL11 family. As to quaternary structure, part of the ribosomal stalk of the 50S ribosomal subunit. Interacts with L10 and the large rRNA to form the base of the stalk. L10 forms an elongated spine to which L12 dimers bind in a sequential fashion forming a multimeric L10(L12)X complex. In terms of processing, one or more lysine residues are methylated.

Forms part of the ribosomal stalk which helps the ribosome interact with GTP-bound translation factors. The sequence is that of Large ribosomal subunit protein uL11 from Actinobacillus succinogenes (strain ATCC 55618 / DSM 22257 / CCUG 43843 / 130Z).